The primary structure comprises 226 residues: Exopolysaccharide production protein ExoY (226 aa).

The helical transmembrane segment at 34-54 (VLIAILALIALSPLFLLVMGL) threads the bilayer.

It belongs to the bacterial sugar transferase family.

It is found in the cell membrane. It participates in glycan metabolism; exopolysaccharide biosynthesis. Its function is as follows. Needed for the addition of the first sugar (galactose) to the isoprenoid carrier. May function as a sugar transferase. In Sinorhizobium fredii (strain NBRC 101917 / NGR234), this protein is Exopolysaccharide production protein ExoY (exoY).